The sequence spans 429 residues: Adenylosuccinate synthetase (429 aa).

Residues 12–18 (GDEGKGK) and 40–42 (GHT) contribute to the GTP site. Residue D13 is the Proton acceptor of the active site. Positions 13 and 40 each coordinate Mg(2+). Residues 13–16 (DEGK), 38–41 (NAGH), T128, R142, Q223, and R302 each bind IMP. H41 acts as the Proton donor in catalysis. 298–304 (TVTGRPR) lines the substrate pocket. Residues R304, 330 to 332 (LLD), and 412 to 414 (SVG) contribute to the GTP site.

Belongs to the adenylosuccinate synthetase family. In terms of assembly, homodimer. Mg(2+) is required as a cofactor.

Its subcellular location is the cytoplasm. The enzyme catalyses IMP + L-aspartate + GTP = N(6)-(1,2-dicarboxyethyl)-AMP + GDP + phosphate + 2 H(+). It participates in purine metabolism; AMP biosynthesis via de novo pathway; AMP from IMP: step 1/2. In terms of biological role, plays an important role in the de novo pathway of purine nucleotide biosynthesis. Catalyzes the first committed step in the biosynthesis of AMP from IMP. This chain is Adenylosuccinate synthetase, found in Lactobacillus delbrueckii subsp. bulgaricus (strain ATCC 11842 / DSM 20081 / BCRC 10696 / JCM 1002 / NBRC 13953 / NCIMB 11778 / NCTC 12712 / WDCM 00102 / Lb 14).